A 641-amino-acid chain; its full sequence is DEAD-box ATP-dependent RNA helicase 50 (641 aa).

Disordered regions lie at residues 86–115 (SMPS…IGNF), 129–189 (RSAH…LNSV), and 197–216 (DDLD…WGNI). Positions 150-159 (PSDESDEDGT) are enriched in acidic residues. The Q motif signature appears at 240-268 (RSFKEIGCSDEILGALRSFGFPRPSHIQA). The Helicase ATP-binding domain occupies 271-452 (YRPVLEGKSC…VETFPDCELI (182 aa)). An ATP-binding site is contributed by 284–291 (DQSGSGKT). The DEAD box motif lies at 399–402 (DEVD). The 155-residue stretch at 487 to 641 (NKKSALVKII…GHPLHDVPCV (155 aa)) folds into the Helicase C-terminal domain.

It belongs to the DEAD box helicase family.

The catalysed reaction is ATP + H2O = ADP + phosphate + H(+). In terms of biological role, probably involved in resistance to biotic and abiotic stresses. Confers tolerance to oxidative stress and mediates pathogenesis-related (PR) genes expression. Exhibits RNA-dependent ATPase and ATP-dependent RNA helicase activities in vitro. In Oryza sativa subsp. japonica (Rice), this protein is DEAD-box ATP-dependent RNA helicase 50.